A 392-amino-acid polypeptide reads, in one-letter code: Phosphoglycerate kinase (392 aa).

Substrate is bound by residues 21–23 (DMN), Arg36, 59–62 (HLGR), Arg114, and Arg147. Residues Lys198, Glu320, and 346–349 (GGDT) contribute to the ATP site.

Belongs to the phosphoglycerate kinase family. In terms of assembly, monomer.

It localises to the cytoplasm. The enzyme catalyses (2R)-3-phosphoglycerate + ATP = (2R)-3-phospho-glyceroyl phosphate + ADP. It participates in carbohydrate degradation; glycolysis; pyruvate from D-glyceraldehyde 3-phosphate: step 2/5. This Neisseria meningitidis serogroup A / serotype 4A (strain DSM 15465 / Z2491) protein is Phosphoglycerate kinase.